We begin with the raw amino-acid sequence, 1122 residues long: Maestro heat-like repeat-containing protein family member 7 (1122 aa).

Disordered regions lie at residues 1–144 (MALS…LSED) and 183–203 (SHTI…NTSL). Over residues 33-65 (TTPRPTPDLTLAPLPAHGVALAPALHPALSPDP) the composition is skewed to low complexity. 3 stretches are compositionally biased toward polar residues: residues 75–95 (DISN…INTA), 120–136 (PVPS…SPEN), and 184–203 (HTIS…NTSL). 5 N-linked (GlcNAc...) asparagine glycosylation sites follow: asparagine 200, asparagine 210, asparagine 255, asparagine 267, and asparagine 296. The interval 246–265 (WNTGSKGSVNVTSNSQPRSG) is disordered. Phosphoserine is present on serine 356. Positions 363–385 (FRSPPEGTSEDAKANESEKRDHD) are disordered. Over residues 372–385 (EDAKANESEKRDHD) the composition is skewed to basic and acidic residues. Residues asparagine 541 and asparagine 546 are each glycosylated (N-linked (GlcNAc...) asparagine). Helical transmembrane passes span 548–568 (TLVT…LLLG) and 722–742 (LLPI…ALLM). HEAT repeat units follow at residues 913-950 (QELC…MEQV), 992-1029 (TKVQ…GQAK), 1035-1072 (SVYI…KLRM), and 1080-1117 (EQLT…FFLL).

It is found in the membrane. The chain is Maestro heat-like repeat-containing protein family member 7 (Mroh7) from Rattus norvegicus (Rat).